A 298-amino-acid polypeptide reads, in one-letter code: Ribosomal protein L11 methyltransferase (298 aa).

T139, G163, D185, and N232 together coordinate S-adenosyl-L-methionine.

The protein belongs to the methyltransferase superfamily. PrmA family.

The protein localises to the cytoplasm. The catalysed reaction is L-lysyl-[protein] + 3 S-adenosyl-L-methionine = N(6),N(6),N(6)-trimethyl-L-lysyl-[protein] + 3 S-adenosyl-L-homocysteine + 3 H(+). Functionally, methylates ribosomal protein L11. This chain is Ribosomal protein L11 methyltransferase, found in Microcystis aeruginosa (strain NIES-843 / IAM M-2473).